The following is a 323-amino-acid chain: Phospho-N-acetylmuramoyl-pentapeptide-transferase (323 aa).

A run of 9 helical transmembrane segments spans residues 3–23 (NILL…PALI), 52–72 (MGGL…SWVL), 77–97 (MLPT…LGMW), 121–141 (IVGA…MALH), 145–165 (IGNW…LVGF), 175–195 (LDGL…IVAW), 200–220 (INIA…LIFN), 226–248 (IFMG…ILLH), and 301–321 (IDLT…WVIL).

It belongs to the glycosyltransferase 4 family. MraY subfamily. Requires Mg(2+) as cofactor.

The protein resides in the cell membrane. The enzyme catalyses UDP-N-acetyl-alpha-D-muramoyl-L-alanyl-gamma-D-glutamyl-L-lysyl-D-alanyl-D-alanine + di-trans,octa-cis-undecaprenyl phosphate = Mur2Ac(oyl-L-Ala-gamma-D-Glu-L-Lys-D-Ala-D-Ala)-di-trans,octa-cis-undecaprenyl diphosphate + UMP. It functions in the pathway cell wall biogenesis; peptidoglycan biosynthesis. Its function is as follows. Catalyzes the initial step of the lipid cycle reactions in the biosynthesis of the cell wall peptidoglycan: transfers peptidoglycan precursor phospho-MurNAc-pentapeptide from UDP-MurNAc-pentapeptide onto the lipid carrier undecaprenyl phosphate, yielding undecaprenyl-pyrophosphoryl-MurNAc-pentapeptide, known as lipid I. This Levilactobacillus brevis (strain ATCC 367 / BCRC 12310 / CIP 105137 / JCM 1170 / LMG 11437 / NCIMB 947 / NCTC 947) (Lactobacillus brevis) protein is Phospho-N-acetylmuramoyl-pentapeptide-transferase.